Here is a 679-residue protein sequence, read N- to C-terminus: Glycine--tRNA ligase beta subunit (679 aa).

Belongs to the class-II aminoacyl-tRNA synthetase family. Tetramer of two alpha and two beta subunits.

It localises to the cytoplasm. The catalysed reaction is tRNA(Gly) + glycine + ATP = glycyl-tRNA(Gly) + AMP + diphosphate. The sequence is that of Glycine--tRNA ligase beta subunit from Streptococcus agalactiae serotype V (strain ATCC BAA-611 / 2603 V/R).